The primary structure comprises 1314 residues: E3 ubiquitin-protein ligase RNF123 (1314 aa).

Ala2 carries the N-acetylalanine modification. In terms of domain architecture, B30.2/SPRY spans 74-254 (VDNEEEESQG…VAFNFGSRPL (181 aa)). Position 675 is a phosphoserine (Ser675). Arg683 is subject to Asymmetric dimethylarginine. The tract at residues 968 to 974 (WILVRLW) is interaction with NFKB1. Residues Cys1254, Cys1257, Cys1269, His1271, Cys1274, Cys1277, Cys1288, and Cys1291 each coordinate Zn(2+). The RING-type zinc-finger motif lies at 1254 to 1292 (CPICYAHPISAVFQPCGHKSCKACINQHLMNNKDCFFCK).

Component of the KPC complex composed of RNF123/KPC1 and UBAC1/KPC2. Interacts with UBAC1 and CDKN1B via its N-terminal domain. Interacts with RIGI (via N-terminus) and IFIH1 (via N-terminus). In terms of processing, ubiquitinated, leading to its degradation. Deubiquitinated by USP19, thereby stimulating CDKN1B ubiquitin-dependent degradation.

It localises to the cytoplasm. The catalysed reaction is S-ubiquitinyl-[E2 ubiquitin-conjugating enzyme]-L-cysteine + [acceptor protein]-L-lysine = [E2 ubiquitin-conjugating enzyme]-L-cysteine + N(6)-ubiquitinyl-[acceptor protein]-L-lysine.. It functions in the pathway protein modification; protein ubiquitination. In terms of biological role, catalytic subunit of the KPC complex that acts as E3 ubiquitin-protein ligase. Promotes the ubiquitination and proteasome-mediated degradation of CDKN1B which is the cyclin-dependent kinase inhibitor at the G0-G1 transition of the cell cycle. Also acts as a key regulator of the NF-kappa-B signaling by promoting maturation of the NFKB1 component of NF-kappa-B: acts by catalyzing ubiquitination of the NFKB1 p105 precursor, leading to limited proteasomal degradation of NFKB1 p105 and generation of the active NFKB1 p50 subunit. Also functions as an inhibitor of innate antiviral signaling mediated by RIGI and IFIH1 independently of its E3 ligase activity. Interacts with the N-terminal CARD domains of RIGI and IFIH1 and competes with the downstream adapter MAVS. The chain is E3 ubiquitin-protein ligase RNF123 from Homo sapiens (Human).